Consider the following 295-residue polypeptide: Small ribosomal subunit protein uS2 (295 aa).

The interval 261–295 (QAKKFSKTKNIDEETNTEFEQVLNDADENKNSDNA) is disordered.

This sequence belongs to the universal ribosomal protein uS2 family.

This is Small ribosomal subunit protein uS2 from Rickettsia rickettsii (strain Sheila Smith).